Reading from the N-terminus, the 235-residue chain is Carboxy-S-adenosyl-L-methionine synthase (235 aa).

Residues Tyr-35, 60 to 62 (GCS), 83 to 84 (DN), Asn-124, and Arg-191 contribute to the S-adenosyl-L-methionine site.

This sequence belongs to the class I-like SAM-binding methyltransferase superfamily. Cx-SAM synthase family. In terms of assembly, homodimer.

It catalyses the reaction prephenate + S-adenosyl-L-methionine = carboxy-S-adenosyl-L-methionine + 3-phenylpyruvate + H2O. Its function is as follows. Catalyzes the conversion of S-adenosyl-L-methionine (SAM) to carboxy-S-adenosyl-L-methionine (Cx-SAM). This chain is Carboxy-S-adenosyl-L-methionine synthase, found in Campylobacter jejuni subsp. jejuni serotype O:23/36 (strain 81-176).